The chain runs to 355 residues: Alanine racemase (355 aa).

The Proton acceptor; specific for D-alanine role is filled by lysine 34. Lysine 34 carries the N6-(pyridoxal phosphate)lysine modification. A substrate-binding site is contributed by arginine 133. Tyrosine 249 acts as the Proton acceptor; specific for L-alanine in catalysis. Methionine 297 is a binding site for substrate.

It belongs to the alanine racemase family. Pyridoxal 5'-phosphate is required as a cofactor.

It catalyses the reaction L-alanine = D-alanine. The protein operates within amino-acid biosynthesis; D-alanine biosynthesis; D-alanine from L-alanine: step 1/1. Its function is as follows. Catalyzes the interconversion of L-alanine and D-alanine. May also act on other amino acids. The sequence is that of Alanine racemase (alr) from Rickettsia conorii (strain ATCC VR-613 / Malish 7).